The primary structure comprises 159 residues: Phosphopantetheine adenylyltransferase (159 aa).

Residue threonine 10 participates in substrate binding. Residues 10–11 (TF) and histidine 18 contribute to the ATP site. Residues lysine 42, methionine 74, and arginine 88 each contribute to the substrate site. ATP contacts are provided by residues 89-91 (GLR), glutamate 99, and 124-130 (WSFISSS).

The protein belongs to the bacterial CoaD family. In terms of assembly, homohexamer. Mg(2+) serves as cofactor.

It localises to the cytoplasm. The enzyme catalyses (R)-4'-phosphopantetheine + ATP + H(+) = 3'-dephospho-CoA + diphosphate. It participates in cofactor biosynthesis; coenzyme A biosynthesis; CoA from (R)-pantothenate: step 4/5. Its function is as follows. Reversibly transfers an adenylyl group from ATP to 4'-phosphopantetheine, yielding dephospho-CoA (dPCoA) and pyrophosphate. This chain is Phosphopantetheine adenylyltransferase, found in Enterobacter sp. (strain 638).